An 83-amino-acid polypeptide reads, in one-letter code: Small ribosomal subunit protein uS15c (83 aa).

This sequence belongs to the universal ribosomal protein uS15 family. Part of the 30S ribosomal subunit.

It is found in the plastid. The protein localises to the chloroplast. This chain is Small ribosomal subunit protein uS15c (rps15), found in Fagopyrum esculentum subsp. ancestrale (Wild buckwheat).